The chain runs to 129 residues: Histone H2A-IV (129 aa).

This sequence belongs to the histone H2A family. In terms of assembly, the nucleosome is a histone octamer containing two molecules each of H2A, H2B, H3 and H4 assembled in one H3-H4 heterotetramer and two H2A-H2B heterodimers. The octamer wraps approximately 147 bp of DNA.

Its subcellular location is the nucleus. The protein localises to the chromosome. Its function is as follows. Core component of nucleosome. Nucleosomes wrap and compact DNA into chromatin, limiting DNA accessibility to the cellular machineries which require DNA as a template. Histones thereby play a central role in transcription regulation, DNA repair, DNA replication and chromosomal stability. DNA accessibility is regulated via a complex set of post-translational modifications of histones, also called histone code, and nucleosome remodeling. The chain is Histone H2A-IV from Volvox carteri (Green alga).